The chain runs to 792 residues: Phenylalanine--tRNA ligase beta subunit (792 aa).

Positions 39–147 constitute a tRNA-binding domain; the sequence is GEALDLILVA…EDAPIGTPLA (109 aa). Residues 400 to 475 form the B5 domain; it reads PAPASILLRR…RIRGYEHLPT (76 aa). 4 residues coordinate Mg(2+): aspartate 453, aspartate 459, glutamate 462, and glutamate 463. In terms of domain architecture, FDX-ACB spans 698–791; sequence SRFPFVRRDL…IQQRHDVRIR (94 aa).

Belongs to the phenylalanyl-tRNA synthetase beta subunit family. Type 1 subfamily. In terms of assembly, tetramer of two alpha and two beta subunits. Requires Mg(2+) as cofactor.

The protein localises to the cytoplasm. The enzyme catalyses tRNA(Phe) + L-phenylalanine + ATP = L-phenylalanyl-tRNA(Phe) + AMP + diphosphate + H(+). The polypeptide is Phenylalanine--tRNA ligase beta subunit (Xylella fastidiosa (strain Temecula1 / ATCC 700964)).